The chain runs to 131 residues: Large ribosomal subunit protein eL32 (131 aa).

Residues 39 to 77 (LGEKWRRPKGRHSKMRRKLKSKPKMPNPGYGSPKKVRGL) form a disordered region. Basic residues predominate over residues 44-61 (RRPKGRHSKMRRKLKSKP).

The protein belongs to the eukaryotic ribosomal protein eL32 family.

The protein is Large ribosomal subunit protein eL32 (rpl32) of Methanopyrus kandleri (strain AV19 / DSM 6324 / JCM 9639 / NBRC 100938).